A 374-amino-acid chain; its full sequence is Peptide chain release factor 2 (374 aa).

Gln-254 bears the N5-methylglutamine mark.

This sequence belongs to the prokaryotic/mitochondrial release factor family. Methylated by PrmC. Methylation increases the termination efficiency of RF2.

The protein resides in the cytoplasm. Its function is as follows. Peptide chain release factor 2 directs the termination of translation in response to the peptide chain termination codons UGA and UAA. The protein is Peptide chain release factor 2 of Renibacterium salmoninarum (strain ATCC 33209 / DSM 20767 / JCM 11484 / NBRC 15589 / NCIMB 2235).